The sequence spans 306 residues: Protoheme IX farnesyltransferase (306 aa).

9 helical membrane passes run 35–55, 61–81, 106–126, 129–149, 157–177, 183–203, 224–244, 245–265, and 286–306; these read LIVF…PTWL, LIAC…NCLV, LTLA…YVWV, LTMW…TVIL, IVIG…AMTG, ALIL…ALAL, EFTR…CLMP, FIFK…SIGF, and RFSL…HYLI.

The protein belongs to the UbiA prenyltransferase family. Protoheme IX farnesyltransferase subfamily.

Its subcellular location is the cell inner membrane. It carries out the reaction heme b + (2E,6E)-farnesyl diphosphate + H2O = Fe(II)-heme o + diphosphate. It functions in the pathway porphyrin-containing compound metabolism; heme O biosynthesis; heme O from protoheme: step 1/1. Its function is as follows. Converts heme B (protoheme IX) to heme O by substitution of the vinyl group on carbon 2 of heme B porphyrin ring with a hydroxyethyl farnesyl side group. In Polaromonas naphthalenivorans (strain CJ2), this protein is Protoheme IX farnesyltransferase.